We begin with the raw amino-acid sequence, 243 residues long: Vesicle-associated membrane protein-associated protein B (243 aa).

Residue Ala2 is modified to N-acetylalanine. Over 2-218 the chain is Cytoplasmic; that stretch reads AKVEQVLSLE…PAPATPGKEE (217 aa). In terms of domain architecture, MSP spans 7-124; it reads VLSLEPQHEL…MDSKLRCVFE (118 aa). Ser146 carries the phosphoserine modification. Lys147 is covalently cross-linked (Glycyl lysine isopeptide (Lys-Gly) (interchain with G-Cter in SUMO1)). Thr150 is subject to Phosphothreonine. Phosphoserine occurs at positions 158 and 159. The stretch at 161–196 forms a coiled coil; the sequence is LDDTEVKKVMEECKRLQSEVQRLREENKQLKEEDGL. Basic and acidic residues predominate over residues 185–197; the sequence is EENKQLKEEDGLR. Residues 185-217 are disordered; that stretch reads EENKQLKEEDGLRMRKPVLSNSPAPAPATPGKE. Ser206 is subject to Phosphoserine. A helical; Anchor for type IV membrane protein membrane pass occupies residues 219–239; it reads GLSTRLLALVVLFFIVGVIIG.

Belongs to the VAMP-associated protein (VAP) (TC 9.B.17) family. Homodimer, and heterodimer with VAPA. Interacts with VAMP1 and VAMP2. Interacts (via MSP domain) with ZFYVE27. Interacts with RMDN3. Interacts with KIF5A in a ZFYVE27-dependent manner. Interacts (via MSP domain) with STARD3 (via phospho-FFAT motif). Interacts with STARD3NL (via FFAT motif). Interacts with CERT1. Interacts with PLEKHA3 and SACM1L to form a ternary complex. Interacts with VPS13A (via FFAT motif). Interacts with RB1CC1 (via phosphorylated FFAT motif), MIGA2 (via phosphorylated FFAT motif), RMDN3 (via phosphorylated FFAT motif), OSBPL1A (via FFAT motif), KCNB1 (via phosphorylated FFAT motif) and KCNB2 (via phosphorylated FFAT motif). Interacts (via MSP domain) with WDR44 (via FFAT motif); the interactions connect the endoplasmic reticulum (ER) with the endosomal tubule.

The protein resides in the endoplasmic reticulum membrane. In terms of biological role, endoplasmic reticulum (ER)-anchored protein that mediates the formation of contact sites between the ER and endosomes via interaction with FFAT motif-containing proteins such as STARD3 or WDR44. Interacts with STARD3 in a FFAT motif phosphorylation dependent manner. Via interaction with WDR44 participates in neosynthesized protein export. Participates in the endoplasmic reticulum unfolded protein response (UPR) by inducing ERN1/IRE1 activity. Involved in cellular calcium homeostasis regulation. This is Vesicle-associated membrane protein-associated protein B from Sus scrofa (Pig).